The chain runs to 156 residues: EPIDERMAL PATTERNING FACTOR-like protein 6 (156 aa).

The signal sequence occupies residues 1–47 (MGFERTSSSLSLLSSSLPSSLQPSENTRAKFSLFYLLLLFFVLCVIA). Intrachain disulfides connect C113–C147, C117–C123, and C120–C149.

The protein belongs to the plant cysteine rich small secretory peptide family. Epidermal patterning factor subfamily. Interacts with ERECTA. Expressed in the internal layers of the root, hypocotyl and stems, and in the midrib of developing rosette leaves. Detected in a ring of cells surrounding the vascular elements. Expressed in developing stems soon after bolting, in inflorescence stems, near the root apex and in the chalazal region of ovules. Not found in cotyledons or in stomatal precursors or stomata.

The protein resides in the secreted. In terms of biological role, acts primarily as positive regulator of inflorescence growth. Endodermal expression is sufficient for proper inflorescence architecture. Redundantly involved with EPFL4 in procambial development regulation. Also acts as tissue-specific regulator of epidermal pattern. Controls stomatal patterning by repressing stomatal production. TMM (AC Q9SSD1) functions to dampen or block CHAL signaling. Not processed by SDD1 (AC O64495). Acts as growth-regulatory ligand for ERECTA family receptors. This is EPIDERMAL PATTERNING FACTOR-like protein 6 from Arabidopsis thaliana (Mouse-ear cress).